The chain runs to 588 residues: Adenine deaminase (588 aa).

It belongs to the metallo-dependent hydrolases superfamily. Adenine deaminase family. Homodimer. Requires Mn(2+) as cofactor.

It carries out the reaction adenine + H2O + H(+) = hypoxanthine + NH4(+). The protein is Adenine deaminase of Escherichia coli (strain SMS-3-5 / SECEC).